A 244-amino-acid polypeptide reads, in one-letter code: MLPFWIALQFLSSLPVRLSGMPEPREMGRSLLCYPLVGLLFGLLLWLASHLLQGAPAPLHAALLLTLWVLLSGALHLDGLADSADAWLGGFGDRERTLKIMKDPRSGPIAVVTLVLVLLLKFCALWVLVERGAGALLVLAPVVGRAAMLGLFLGTPYVRPGGLGQALAEHLPRQTAGWVLLGSLLLCLLLGGWSAIWPMALALGVFLWLRRLMCQRLGGTTGDTAGAMLELLELTVVLGLALAT.

The next 5 membrane-spanning stretches (helical) occupy residues 31–51 (LLCY…ASHL), 55–75 (APAP…SGAL), 109–129 (IAVV…WVLV), 133–153 (AGAL…GLFL), and 188–208 (LLLG…VFLW).

This sequence belongs to the CobS family. It depends on Mg(2+) as a cofactor.

The protein localises to the cell inner membrane. The enzyme catalyses alpha-ribazole + adenosylcob(III)inamide-GDP = adenosylcob(III)alamin + GMP + H(+). It catalyses the reaction alpha-ribazole 5'-phosphate + adenosylcob(III)inamide-GDP = adenosylcob(III)alamin 5'-phosphate + GMP + H(+). The protein operates within cofactor biosynthesis; adenosylcobalamin biosynthesis; adenosylcobalamin from cob(II)yrinate a,c-diamide: step 7/7. Joins adenosylcobinamide-GDP and alpha-ribazole to generate adenosylcobalamin (Ado-cobalamin). Also synthesizes adenosylcobalamin 5'-phosphate from adenosylcobinamide-GDP and alpha-ribazole 5'-phosphate. The polypeptide is Adenosylcobinamide-GDP ribazoletransferase (Pseudomonas putida (strain W619)).